A 510-amino-acid chain; its full sequence is GMP synthase [glutamine-hydrolyzing] (510 aa).

The Glutamine amidotransferase type-1 domain maps to 5–195 (LVIVLDFGGQ…LFNIADLSAD (191 aa)). Residue Cys82 is the Nucleophile of the active site. Residues His169 and Glu171 contribute to the active site. The region spanning 196–385 (WTMGSYIEET…LGLHREIVER (190 aa)) is the GMPS ATP-PPase domain. Residue 223 to 229 (SGGIDST) participates in ATP binding.

In terms of assembly, homodimer.

The enzyme catalyses XMP + L-glutamine + ATP + H2O = GMP + L-glutamate + AMP + diphosphate + 2 H(+). It functions in the pathway purine metabolism; GMP biosynthesis; GMP from XMP (L-Gln route): step 1/1. Functionally, catalyzes the synthesis of GMP from XMP. This chain is GMP synthase [glutamine-hydrolyzing], found in Natranaerobius thermophilus (strain ATCC BAA-1301 / DSM 18059 / JW/NM-WN-LF).